The chain runs to 737 residues: Catalase-peroxidase (737 aa).

The segment at 1–29 (MTDSPDATTGGCPVAHGDRLPHPTQGGAN) is disordered. The segment at residues 101 to 227 (WHSAGTYRVS…LGATHMGLIY (127 aa)) is a cross-link (tryptophyl-tyrosyl-methioninium (Trp-Tyr) (with M-253)). The active-site Proton acceptor is His102. The segment at residues 227-253 (YVNPEGPEGKPDPVAAARDIRETFGRM) is a cross-link (tryptophyl-tyrosyl-methioninium (Tyr-Met) (with W-101)). Heme b is bound at residue His268.

The protein belongs to the peroxidase family. Peroxidase/catalase subfamily. Homodimer or homotetramer. Requires heme b as cofactor. Post-translationally, formation of the three residue Trp-Tyr-Met cross-link is important for the catalase, but not the peroxidase activity of the enzyme.

The catalysed reaction is H2O2 + AH2 = A + 2 H2O. The enzyme catalyses 2 H2O2 = O2 + 2 H2O. In terms of biological role, bifunctional enzyme with both catalase and broad-spectrum peroxidase activity. This is Catalase-peroxidase from Saccharopolyspora erythraea (strain ATCC 11635 / DSM 40517 / JCM 4748 / NBRC 13426 / NCIMB 8594 / NRRL 2338).